A 504-amino-acid chain; its full sequence is O-fucosyltransferase 39 (504 aa).

A helical; Signal-anchor for type II membrane protein transmembrane segment spans residues 11-27 (WILSMFFFVVLFCNNVS). Asn-115 is a glycosylation site (N-linked (GlcNAc...) asparagine). 288-290 (HLR) contributes to the substrate binding site. 2 N-linked (GlcNAc...) asparagine glycosylation sites follow: Asn-359 and Asn-460.

It belongs to the glycosyltransferase GT106 family.

The protein resides in the membrane. It participates in glycan metabolism. This chain is O-fucosyltransferase 39, found in Arabidopsis thaliana (Mouse-ear cress).